Reading from the N-terminus, the 94-residue chain is Co-chaperonin GroES (94 aa).

This sequence belongs to the GroES chaperonin family. Heptamer of 7 subunits arranged in a ring. Interacts with the chaperonin GroEL.

It localises to the cytoplasm. In terms of biological role, together with the chaperonin GroEL, plays an essential role in assisting protein folding. The GroEL-GroES system forms a nano-cage that allows encapsulation of the non-native substrate proteins and provides a physical environment optimized to promote and accelerate protein folding. GroES binds to the apical surface of the GroEL ring, thereby capping the opening of the GroEL channel. The chain is Co-chaperonin GroES from Halothermothrix orenii (strain H 168 / OCM 544 / DSM 9562).